We begin with the raw amino-acid sequence, 1009 residues long: Protein-tyrosine kinase 2-beta (1009 aa).

The FERM domain maps to 39–359 (RILKVCFYSN…GYCRLQGEHK (321 aa)). Phosphoserine occurs at positions 361, 375, and 399. Tyr402 bears the Phosphotyrosine; by autocatalysis mark. The region spanning 425–683 (VVLNRILGEG…ELVCSLSDIY (259 aa)) is the Protein kinase domain. ATP contacts are provided by residues 431–439 (LGEGFFGEV), Lys457, and 503–509 (ELYPYGE). The active-site Proton acceptor is the Asp549. The residue at position 579 (Tyr579) is a Phosphotyrosine. Tyr580 carries the phosphotyrosine; by SRC, FYN and LCK modification. Residues 696-728 (NARYRPPKILEPTTFQEPPPKPSRPKYRPPPQT) are disordered. A compositionally biased stretch (pro residues) spans 712–727 (EPPPKPSRPKYRPPPQ). At Tyr722 the chain carries Phosphotyrosine. Ser762 is modified (phosphoserine). Thr765 bears the Phosphothreonine mark. The interaction with TGFB1I1 stretch occupies residues 801-1009 (KIKMKQVLER…VANLAHPPAE (209 aa)). Tyr834 carries the post-translational modification Phosphotyrosine. Ser839 carries the post-translational modification Phosphoserine. Phosphothreonine is present on Thr842. The residue at position 849 (Tyr849) is a Phosphotyrosine. Ser866 bears the Phosphoserine mark. Residues 868–1009 (QPTANLDRTD…VANLAHPPAE (142 aa)) form a focal adhesion targeting (FAT) region. Position 881 is a phosphotyrosine (Tyr881).

It belongs to the protein kinase superfamily. Tyr protein kinase family. FAK subfamily. As to quaternary structure, homodimer, or homooligomer. Interacts with KCNA2. Interacts with NPHP1, ASAP1, ASAP2, ARHGAP26, SKAP2 and TGFB1I1. The Tyr-402 phosphorylated form interacts with SRC (via SH2 domain) and SRC family members. Forms a signaling complex with EPHA1, LCK and phosphatidylinositol 3-kinase; upon activation by EFNA1. Interacts with GRB2 (via SH2 domain). Interacts with P53/TP53 and MDM2. Interacts with MYLK. Interacts with BCAR1. Interacts with RB1CC1. Interacts with RHOU. Interacts with VAV1. Interacts with PDPK1. Interacts with DLG4. Interacts with LPXN and PTPN12. Interacts with SIRPA and SH2D3C. Interacts (hypophosphorylated) with PXN. Interacts with ARHGAP10. In terms of processing, phosphorylated on tyrosine residues in response to various stimuli that elevate the intracellular calcium concentration; this activation is indirect and may be mediated by production of reactive oxygen species (ROS). Tyr-402 is the major autophosphorylation site, but other kinases can also phosphorylate Tyr-402. Autophosphorylation occurs in trans, i.e. one subunit of the dimeric receptor phosphorylates tyrosine residues on the other subunit. Phosphorylation at Tyr-402 promotes interaction with SRC and SRC family members, leading to phosphorylation at Tyr-579; Tyr-580 and Tyr-881. Phosphorylation at Tyr-881 is important for interaction with GRB2. Phosphorylated on tyrosine residues upon activation of FGR and PKC. Recruitment by NPHP1 to cell matrix adhesions initiates Tyr-402 phosphorylation. In monocytes, adherence to substrata is required for tyrosine phosphorylation and kinase activation. Angiotensin II, thapsigargin and L-alpha-lysophosphatidic acid (LPA) also induce autophosphorylation and increase kinase activity. Phosphorylation by MYLK promotes ITGB2 activation and is thus essential to trigger neutrophil transmigration during lung injury. Dephosphorylated by PTPN12.

The protein localises to the cytoplasm. Its subcellular location is the perinuclear region. The protein resides in the cell membrane. It is found in the cell junction. It localises to the focal adhesion. The protein localises to the cell projection. Its subcellular location is the lamellipodium. The protein resides in the cell cortex. It is found in the nucleus. The catalysed reaction is L-tyrosyl-[protein] + ATP = O-phospho-L-tyrosyl-[protein] + ADP + H(+). Its activity is regulated as follows. Activated in response to stimuli that lead to increased intracellular Ca(2+) levels; this activation is indirect and may be mediated by calcium-mediated production of reactive oxygen species (ROS). Activated by autophosphorylation at Tyr-402; this creates a binding site for SRC family kinases and leads to phosphorylation at additional tyrosine residues. Phosphorylation at Tyr-402, Tyr-579 and Tyr-580 is required for optimal kinase activity. Functionally, non-receptor protein-tyrosine kinase that regulates reorganization of the actin cytoskeleton, cell polarization, cell migration, adhesion, spreading and bone remodeling. Plays a role in the regulation of the humoral immune response, and is required for normal levels of marginal B-cells in the spleen and normal migration of splenic B-cells. Required for normal macrophage polarization and migration towards sites of inflammation. Regulates cytoskeleton rearrangement and cell spreading in T-cells, and contributes to the regulation of T-cell responses. Promotes osteoclastic bone resorption; this requires both PTK2B/PYK2 and SRC. May inhibit differentiation and activity of osteoprogenitor cells. Functions in signaling downstream of integrin and collagen receptors, immune receptors, G-protein coupled receptors (GPCR), cytokine, chemokine and growth factor receptors, and mediates responses to cellular stress. Forms multisubunit signaling complexes with SRC and SRC family members upon activation; this leads to the phosphorylation of additional tyrosine residues, creating binding sites for scaffold proteins, effectors and substrates. Regulates numerous signaling pathways. Promotes activation of phosphatidylinositol 3-kinase and of the AKT1 signaling cascade. Promotes activation of NOS3. Regulates production of the cellular messenger cGMP. Promotes activation of the MAP kinase signaling cascade, including activation of MAPK1/ERK2, MAPK3/ERK1 and MAPK8/JNK1. Promotes activation of Rho family GTPases, such as RHOA and RAC1. Recruits the ubiquitin ligase MDM2 to P53/TP53 in the nucleus, and thereby regulates P53/TP53 activity, P53/TP53 ubiquitination and proteasomal degradation. Acts as a scaffold, binding to both PDPK1 and SRC, thereby allowing SRC to phosphorylate PDPK1 at 'Tyr-9, 'Tyr-373', and 'Tyr-376'. Promotes phosphorylation of NMDA receptors by SRC family members, and thereby contributes to the regulation of NMDA receptor ion channel activity and intracellular Ca(2+) levels. May also regulate potassium ion transport by phosphorylation of potassium channel subunits. Phosphorylates SRC; this increases SRC kinase activity. Phosphorylates ASAP1, NPHP1, KCNA2 and SHC1. Promotes phosphorylation of ASAP2, RHOU and PXN; this requires both SRC and PTK2/PYK2. In Mus musculus (Mouse), this protein is Protein-tyrosine kinase 2-beta (Ptk2b).